The chain runs to 371 residues: tRNA-specific 2-thiouridylase MnmA (371 aa).

ATP-binding positions include 14–21 (GMSGGVDS) and methionine 40. The interaction with target base in tRNA stretch occupies residues 100-102 (NPD). Cysteine 105 (nucleophile) is an active-site residue. The cysteines at positions 105 and 205 are disulfide-linked. Glycine 129 contacts ATP. Residues 155-157 (KDQ) are interaction with tRNA. Residue cysteine 205 is the Cysteine persulfide intermediate of the active site. The interaction with tRNA stretch occupies residues 321–322 (RY).

It belongs to the MnmA/TRMU family.

Its subcellular location is the cytoplasm. It catalyses the reaction S-sulfanyl-L-cysteinyl-[protein] + uridine(34) in tRNA + AH2 + ATP = 2-thiouridine(34) in tRNA + L-cysteinyl-[protein] + A + AMP + diphosphate + H(+). Its function is as follows. Catalyzes the 2-thiolation of uridine at the wobble position (U34) of tRNA, leading to the formation of s(2)U34. This Bordetella parapertussis (strain 12822 / ATCC BAA-587 / NCTC 13253) protein is tRNA-specific 2-thiouridylase MnmA.